The primary structure comprises 483 residues: Leukocyte immunoglobulin-like receptor subfamily A member 2 (483 aa).

An N-terminal signal peptide occupies residues 1 to 23; the sequence is MTPILTVLICLGLSLGPRTHVQA. The Extracellular segment spans residues 24-449; sequence GHLPKPTLWA…QHPQDYTVEN (426 aa). Ig-like C2-type domains follow at residues 27–113, 117–222, 224–313, and 324–413; these read PKPT…DPLE, TGAY…GVSK, PSLS…DPLD, and PSLS…SDPL. A disulfide bond links cysteine 49 and cysteine 97. Residues asparagine 64, asparagine 103, and asparagine 138 are each glycosylated (N-linked (GlcNAc...) asparagine). 2 disulfide bridges follow: cysteine 143–cysteine 195 and cysteine 244–cysteine 295. Residues asparagine 279, asparagine 300, and asparagine 339 are each glycosylated (N-linked (GlcNAc...) asparagine). Residues cysteine 344 and cysteine 395 are joined by a disulfide bond. Tyrosine 404 carries the post-translational modification 3'-nitrotyrosine. An N-linked (GlcNAc...) asparagine glycan is attached at asparagine 429. A helical membrane pass occupies residues 450–470; sequence LIRMGVAGLVLVVLGILLFEA. Topologically, residues 471–483 are cytoplasmic; the sequence is QHSQRSLQDAAGR.

As to quaternary structure, homodimer. As to expression, detected on the surface of all peripheral blood monocytes, neutrophils, basophils and eosinophils (at protein level). Expression levels are very low or not detectable on monocytes, T-cells, B-cells, dendritic cells and natural killer (NK) cells.

The protein localises to the cell membrane. It is found in the secreted. Its function is as follows. Part of the innate immune responses against microbial infection. Specifically recognizes a set of N-terminally truncated immunoglobulins that are produced via cleavage by proteases from a range of pathogenic bacteria and fungi, including L.pneumophila, M.hyorhinis, S.pneumoniae, S.aureus and C.albicans. Recognizes epitopes that are in part in the variable region of the immunoglobulin light chains, but requires also the constant region for signaling. Binds to a subset of cleaved IgM, IgG3 and IgG4 molecules, but does not bind cleaved IgA1. Binding of N-terminally truncated immunoglobulins mediates activation of neutrophils. In monocytes, activation leads to the release of CSF2, CF3, IL6, CXCL8 and CCL3 and down-regulates responses to bacterial lipopolysaccharide (LPS), possibly via down-regulation of TLR4 expression and reduced signaling via TLR4. In eosinophils, activation by ligand binding leads to the release of RNASE2, IL4 and leukotriene C4. Does not bind class I MHC antigens. In Homo sapiens (Human), this protein is Leukocyte immunoglobulin-like receptor subfamily A member 2 (LILRA2).